The sequence spans 460 residues: Arginine biosynthesis bifunctional protein ArgJ, chloroplastic (460 aa).

The transit peptide at 1–26 (MYLSVPHYPSLKFTAFQSHKRNFRVF) directs the protein to the chloroplast. 6 residues coordinate substrate: Thr202, Lys228, Thr239, Glu328, Asn455, and Thr460. Thr239 functions as the Nucleophile in the catalytic mechanism.

This sequence belongs to the ArgJ family. As to quaternary structure, heterodimer of an alpha and a beta chain.

Its subcellular location is the plastid. The protein resides in the chloroplast. It catalyses the reaction N(2)-acetyl-L-ornithine + L-glutamate = N-acetyl-L-glutamate + L-ornithine. The enzyme catalyses L-glutamate + acetyl-CoA = N-acetyl-L-glutamate + CoA + H(+). It functions in the pathway amino-acid biosynthesis; L-arginine biosynthesis; L-ornithine and N-acetyl-L-glutamate from L-glutamate and N(2)-acetyl-L-ornithine (cyclic): step 1/1. It participates in amino-acid biosynthesis; L-arginine biosynthesis; N(2)-acetyl-L-ornithine from L-glutamate: step 1/4. Its function is as follows. Catalyzes two activities which are involved in the cyclic version of arginine biosynthesis: the synthesis of acetylglutamate from glutamate and acetyl-CoA, and of ornithine by transacetylation between acetylornithine and glutamate. This Citrullus lanatus (Watermelon) protein is Arginine biosynthesis bifunctional protein ArgJ, chloroplastic.